Consider the following 234-residue polypeptide: Ribonuclease 3 (234 aa).

Residues 4-133 form the RNase III domain; the sequence is LLDLEHKLNY…ILGAVYIDSN (130 aa). Glutamate 46 lines the Mg(2+) pocket. Aspartate 50 is an active-site residue. Residues aspartate 119 and glutamate 122 each contribute to the Mg(2+) site. Residue glutamate 122 is part of the active site. Positions 160–228 constitute a DRBM domain; sequence DFKSILQEYV…AKALCIKLGV (69 aa).

This sequence belongs to the ribonuclease III family. As to quaternary structure, homodimer. Mg(2+) is required as a cofactor.

Its subcellular location is the cytoplasm. It catalyses the reaction Endonucleolytic cleavage to 5'-phosphomonoester.. In terms of biological role, digests double-stranded RNA. Involved in the processing of primary rRNA transcript to yield the immediate precursors to the large and small rRNAs (23S and 16S). Processes some mRNAs, and tRNAs when they are encoded in the rRNA operon. Processes pre-crRNA and tracrRNA of type II CRISPR loci if present in the organism. In Fusobacterium nucleatum subsp. nucleatum (strain ATCC 25586 / DSM 15643 / BCRC 10681 / CIP 101130 / JCM 8532 / KCTC 2640 / LMG 13131 / VPI 4355), this protein is Ribonuclease 3.